Consider the following 210-residue polypeptide: Large ribosomal subunit protein bL25 (210 aa).

Residues 179 to 210 (LPPQQEEEIHSGEQQEPGHPDAEEGRETTPES) form a disordered region. The segment covering 185 to 210 (EEIHSGEQQEPGHPDAEEGRETTPES) has biased composition (basic and acidic residues).

The protein belongs to the bacterial ribosomal protein bL25 family. CTC subfamily. Part of the 50S ribosomal subunit; part of the 5S rRNA/L5/L18/L25 subcomplex. Contacts the 5S rRNA. Binds to the 5S rRNA independently of L5 and L18.

Its function is as follows. This is one of the proteins that binds to the 5S RNA in the ribosome where it forms part of the central protuberance. This is Large ribosomal subunit protein bL25 from Geobacillus sp. (strain WCH70).